The sequence spans 363 residues: MKHVLLYCRSGFEKECAGEIQDKATQLEVFGFPRLKNNTGFVLFECYQAGEADKLIKEIDFQSLIFARQMLAVAVEIKDLPTDDRISPILEALSEKEGFPRCGDIRIETPDTNEAKELLKFCRKFTVPMRQAMRGKGLMTAKDNAKKPVLHLCFIAPGHCFVGYSYPTNNSQFFMGIPRLKFPSDAPSRSTLKLEEAFHVFIPRDEWDERLAPGMWGVDLGACPGGWTYQLVKRSMFVHCVDNGMMADSLMETGQIKHHMVDGFKFEPDRKNVTWIICDMVEKPARVAHLMGEWIIKGWAKEALFNLKLPMKGRYDEVLQDIENLKQFLIDNKVKFKMQAKHLYHDREEITVHIQSLSNISPY.

Residues Ser-190, 223–226 (CPGG), Asp-242, Asp-262, and Asp-279 contribute to the S-adenosyl-L-methionine site. Residue Lys-308 is the Proton acceptor of the active site.

This sequence belongs to the class I-like SAM-binding methyltransferase superfamily. RNA methyltransferase RlmE family. RlmM subfamily. In terms of assembly, monomer.

The protein localises to the cytoplasm. The catalysed reaction is cytidine(2498) in 23S rRNA + S-adenosyl-L-methionine = 2'-O-methylcytidine(2498) in 23S rRNA + S-adenosyl-L-homocysteine + H(+). In terms of biological role, catalyzes the 2'-O-methylation at nucleotide C2498 in 23S rRNA. This chain is Ribosomal RNA large subunit methyltransferase M, found in Vibrio atlanticus (strain LGP32) (Vibrio splendidus (strain Mel32)).